We begin with the raw amino-acid sequence, 1307 residues long: Cellulose synthase 2 operon protein C (1307 aa).

An N-terminal signal peptide occupies residues 1-55 (MTRPRGPAPRDGAAWRRDPARRVLLRDAVRGREGGLRLACAVMAGLIVSGGVACA). TPR repeat units lie at residues 97 to 130 (LELL…EPDN), 270 to 303 (LDGL…EPIT), 339 to 372 (AAND…DPHD), 374 to 406 (DALG…GPDA), 458 to 491 (LTVL…APRD), 493 to 525 (GALF…APAM), 528 to 561 (RLEA…DPDD), 754 to 787 (IGLA…HPDS), and 788 to 821 (VEAH…KPAN).

It belongs to the AcsC/BcsC family.

It localises to the cell outer membrane. The protein operates within glycan metabolism; bacterial cellulose biosynthesis. Its function is as follows. Required for maximal bacterial cellulose synthesis. This chain is Cellulose synthase 2 operon protein C (bcsCII), found in Komagataeibacter xylinus (Gluconacetobacter xylinus).